The primary structure comprises 155 residues: 6,7-dimethyl-8-ribityllumazine synthase (155 aa).

5-amino-6-(D-ribitylamino)uracil contacts are provided by residues Trp-22, 56–58 (SYE), and 80–82 (AVI). (2S)-2-hydroxy-3-oxobutyl phosphate is bound at residue 85-86 (DT). His-88 (proton donor) is an active-site residue. Phe-113 provides a ligand contact to 5-amino-6-(D-ribitylamino)uracil. Arg-127 lines the (2S)-2-hydroxy-3-oxobutyl phosphate pocket.

It belongs to the DMRL synthase family.

The catalysed reaction is (2S)-2-hydroxy-3-oxobutyl phosphate + 5-amino-6-(D-ribitylamino)uracil = 6,7-dimethyl-8-(1-D-ribityl)lumazine + phosphate + 2 H2O + H(+). Its pathway is cofactor biosynthesis; riboflavin biosynthesis; riboflavin from 2-hydroxy-3-oxobutyl phosphate and 5-amino-6-(D-ribitylamino)uracil: step 1/2. Catalyzes the formation of 6,7-dimethyl-8-ribityllumazine by condensation of 5-amino-6-(D-ribitylamino)uracil with 3,4-dihydroxy-2-butanone 4-phosphate. This is the penultimate step in the biosynthesis of riboflavin. The chain is 6,7-dimethyl-8-ribityllumazine synthase from Deinococcus radiodurans (strain ATCC 13939 / DSM 20539 / JCM 16871 / CCUG 27074 / LMG 4051 / NBRC 15346 / NCIMB 9279 / VKM B-1422 / R1).